The primary structure comprises 91 residues: MTGSSIVSLMSQSLVVFMIWILPPLIASVIVGLTIGIIQAATQIQDESLPLTVKLLVVVAVIGLFAPVLSAPLIELADQIFTEFPAMTLGY.

The next 2 membrane-spanning stretches (helical) occupy residues 15–35 and 55–75; these read VVFM…GLTI and LLVV…PLIE.

This sequence belongs to the FliQ/MopD/SpaQ family.

It is found in the cell membrane. In terms of biological role, could be involved in the secretion of an unknown factor. This chain is Probable translocation protein y4yM, found in Sinorhizobium fredii (strain NBRC 101917 / NGR234).